A 528-amino-acid chain; its full sequence is Glucose-6-phosphate isomerase (528 aa).

Catalysis depends on glutamate 322, which acts as the Proton donor. Residues histidine 351 and lysine 455 contribute to the active site.

Belongs to the GPI family.

It localises to the cytoplasm. The enzyme catalyses alpha-D-glucose 6-phosphate = beta-D-fructose 6-phosphate. The protein operates within carbohydrate biosynthesis; gluconeogenesis. Its pathway is carbohydrate degradation; glycolysis; D-glyceraldehyde 3-phosphate and glycerone phosphate from D-glucose: step 2/4. Functionally, catalyzes the reversible isomerization of glucose-6-phosphate to fructose-6-phosphate. This chain is Glucose-6-phosphate isomerase, found in Synechococcus elongatus (strain ATCC 33912 / PCC 7942 / FACHB-805) (Anacystis nidulans R2).